A 297-amino-acid polypeptide reads, in one-letter code: Retroviral cyclin (297 aa).

A Cyclin N-terminal domain is found at 21 to 113 (PVYWKELLNW…KPSLLLTETM (93 aa)). The transcription activation domain stretch occupies residues 21–113 (PVYWKELLNW…KPSLLLTETM (93 aa)). Residues 222–270 (QINLDFAEAEQREAAERRALLEREREQQLQEARERLDDVMAVLEAEVAI) are a coiled coil.

The protein belongs to the cyclin family. Interacts (via transcription activation domain) with host TAF9 in vitro. Interacts with host CDK3 and CDK8.

The protein resides in the host nucleus. Functionally, transforming protein which induces the development of dermal sarcomas. Induces positive and negative regulation of transcription from host and viral promoters by interacting with various cellular factors involved in protein transcription regulation. This Sander vitreus (Walleye) protein is Retroviral cyclin (orfA).